We begin with the raw amino-acid sequence, 252 residues long: MPIQPLKKELVSFLEPYMPENAGVLGEQEKPYVILTYAQSLDARIAKIKGTRTIISHQETNTMTHYLRYKFDGIMLGCGTVLVDDPGLNCKWWPDDEPKPEHFAEHSPRPIILDPNGKWKFEGSKMKTLFDSGDGKAPIVVVKKLPEVVEENVDYLVMQTNFTGKVDWHDLFIQLKSQFGLKSIMVEGGGIVINDLLQRPHLIDALVITVGATFLGSEGVEVSPLIEINLKDISWWKGTRDSVLCSRLVSHS.

NADP(+) contacts are provided by residues Thr80, Asp84, Val166, and 189-193 (GGIVI).

This sequence belongs to the HTP reductase family. In terms of assembly, homodimer.

The enzyme catalyses 2,5-diamino-6-(1-D-ribitylamino)pyrimidin-4(3H)-one 5'-phosphate + NADP(+) = 2,5-diamino-6-(1-D-ribosylamino)pyrimidin-4(3H)-one 5'-phosphate + NADPH + H(+). The catalysed reaction is 2,5-diamino-6-(1-D-ribitylamino)pyrimidin-4(3H)-one 5'-phosphate + NAD(+) = 2,5-diamino-6-(1-D-ribosylamino)pyrimidin-4(3H)-one 5'-phosphate + NADH + H(+). It participates in cofactor biosynthesis; riboflavin biosynthesis. Catalyzes an early step in riboflavin biosynthesis, the NADPH-dependent reduction of the ribose side chain of 2,5-diamino-6-ribosylamino-4(3H)-pyrimidinone 5'-phosphate, yielding 2,5-diamino-6-ribitylamino-4(3H)-pyrimidinone 5'-phosphate. This chain is 2,5-diamino-6-ribosylamino-4(3H)-pyrimidinone 5'-phosphate reductase (RIB7), found in Kluyveromyces lactis (strain ATCC 8585 / CBS 2359 / DSM 70799 / NBRC 1267 / NRRL Y-1140 / WM37) (Yeast).